Consider the following 281-residue polypeptide: Pantothenate synthetase (281 aa).

Position 30 to 37 (30 to 37) interacts with ATP; sequence MGALHRGH. Residue His37 is the Proton donor of the active site. Gln61 lines the (R)-pantoate pocket. Gln61 serves as a coordination point for beta-alanine. ATP is bound at residue 147-150; it reads GEKD. Gln153 lines the (R)-pantoate pocket. ATP is bound by residues Ile176 and 184–187; that span reads LSSR.

The protein belongs to the pantothenate synthetase family. As to quaternary structure, homodimer.

Its subcellular location is the cytoplasm. It carries out the reaction (R)-pantoate + beta-alanine + ATP = (R)-pantothenate + AMP + diphosphate + H(+). The protein operates within cofactor biosynthesis; (R)-pantothenate biosynthesis; (R)-pantothenate from (R)-pantoate and beta-alanine: step 1/1. In terms of biological role, catalyzes the condensation of pantoate with beta-alanine in an ATP-dependent reaction via a pantoyl-adenylate intermediate. This is Pantothenate synthetase from Porphyromonas gingivalis (strain ATCC 33277 / DSM 20709 / CIP 103683 / JCM 12257 / NCTC 11834 / 2561).